A 368-amino-acid polypeptide reads, in one-letter code: Molybdenum import ATP-binding protein ModC (368 aa).

The region spanning 1-230 is the ABC transporter domain; that stretch reads MTIKIQFKQT…HAMRPWQSFS (230 aa). 32 to 39 provides a ligand contact to ATP; sequence GRSGAGKT. The Mop domain occupies 291–362; that stretch reads ATSIRNVLPA…VKGVSVTQRD (72 aa).

This sequence belongs to the ABC transporter superfamily. Molybdate importer (TC 3.A.1.8) family. The complex is composed of two ATP-binding proteins (ModC), two transmembrane proteins (ModB) and a solute-binding protein (ModA).

It localises to the cell inner membrane. The catalysed reaction is molybdate(out) + ATP + H2O = molybdate(in) + ADP + phosphate + H(+). Functionally, part of the ABC transporter complex ModABC involved in molybdenum import. Responsible for energy coupling to the transport system. The sequence is that of Molybdenum import ATP-binding protein ModC from Vibrio parahaemolyticus serotype O3:K6 (strain RIMD 2210633).